The primary structure comprises 101 residues: NADH-quinone oxidoreductase subunit K (101 aa).

Transmembrane regions (helical) follow at residues 4 to 24 (LADY…GIFI), 30 to 50 (LVLL…FIAF), and 61 to 81 (VFVF…LAIV).

This sequence belongs to the complex I subunit 4L family. In terms of assembly, NDH-1 is composed of 14 different subunits. Subunits NuoA, H, J, K, L, M, N constitute the membrane sector of the complex.

It is found in the cell inner membrane. The catalysed reaction is a quinone + NADH + 5 H(+)(in) = a quinol + NAD(+) + 4 H(+)(out). NDH-1 shuttles electrons from NADH, via FMN and iron-sulfur (Fe-S) centers, to quinones in the respiratory chain. The immediate electron acceptor for the enzyme in this species is believed to be ubiquinone. Couples the redox reaction to proton translocation (for every two electrons transferred, four hydrogen ions are translocated across the cytoplasmic membrane), and thus conserves the redox energy in a proton gradient. This Alkalilimnicola ehrlichii (strain ATCC BAA-1101 / DSM 17681 / MLHE-1) protein is NADH-quinone oxidoreductase subunit K.